Here is an 88-residue protein sequence, read N- to C-terminus: Phosphocarrier protein HPr (88 aa).

The HPr domain maps to 1 to 88; it reads MEKKEFHIVA…ETLQKEGLAE (88 aa). H15 serves as the catalytic Pros-phosphohistidine intermediate. S46 is modified (phosphoserine; by HPrK/P).

The protein belongs to the HPr family. As to quaternary structure, monomer.

It is found in the cytoplasm. With respect to regulation, phosphorylation on Ser-46 inhibits the phosphoryl transfer from enzyme I to HPr. Its function is as follows. General (non sugar-specific) component of the phosphoenolpyruvate-dependent sugar phosphotransferase system (sugar PTS). This major carbohydrate active-transport system catalyzes the phosphorylation of incoming sugar substrates concomitantly with their translocation across the cell membrane. The phosphoryl group from phosphoenolpyruvate (PEP) is transferred to the phosphoryl carrier protein HPr by enzyme I. Phospho-HPr then transfers it to the PTS EIIA domain. In terms of biological role, P-Ser-HPr interacts with the catabolite control protein A (CcpA), forming a complex that binds to DNA at the catabolite response elements cre, operator sites preceding a large number of catabolite-regulated genes. Thus, P-Ser-HPr is a corepressor in carbon catabolite repression (CCR), a mechanism that allows bacteria to coordinate and optimize the utilization of available carbon sources. P-Ser-HPr also plays a role in inducer exclusion, in which it probably interacts with several non-PTS permeases and inhibits their transport activity. The chain is Phosphocarrier protein HPr (ptsH) from Enterococcus faecalis (strain ATCC 700802 / V583).